A 531-amino-acid chain; its full sequence is Peroxinectin A (531 aa).

Positions 1–21 (MRLNLISFFIIFTILVSISNS) are cleaved as a signal peptide. N-linked (GlcNAc...) asparagine glycosylation occurs at N62. H101 functions as the Proton acceptor in the catalytic mechanism. N131 and N338 each carry an N-linked (GlcNAc...) asparagine glycan.

The protein belongs to the peroxidase family.

The protein localises to the secreted. The catalysed reaction is 2 a phenolic donor + H2O2 = 2 a phenolic radical donor + 2 H2O. The sequence is that of Peroxinectin A (poxA) from Dictyostelium discoideum (Social amoeba).